An 856-amino-acid chain; its full sequence is DNA gyrase subunit A (856 aa).

Positions 45–517 (LPDARDGLKP…DDGTVTHEDL (473 aa)) constitute a Topo IIA-type catalytic domain. The active-site O-(5'-phospho-DNA)-tyrosine intermediate is Y133. The GyrA-box signature appears at 544–550 (QHRGGKG). The segment at 822 to 856 (TVASVDTHPRTDDSSEADSGDGESESENATATTPS) is disordered. Residues 835–847 (SSEADSGDGESES) are compositionally biased toward acidic residues.

Belongs to the type II topoisomerase GyrA/ParC subunit family. As to quaternary structure, heterotetramer, composed of two GyrA and two GyrB chains. In the heterotetramer, GyrA contains the active site tyrosine that forms a transient covalent intermediate with DNA, while GyrB binds cofactors and catalyzes ATP hydrolysis.

The protein localises to the cytoplasm. It catalyses the reaction ATP-dependent breakage, passage and rejoining of double-stranded DNA.. Its function is as follows. A type II topoisomerase that negatively supercoils closed circular double-stranded (ds) DNA in an ATP-dependent manner to modulate DNA topology and maintain chromosomes in an underwound state. Negative supercoiling favors strand separation, and DNA replication, transcription, recombination and repair, all of which involve strand separation. Also able to catalyze the interconversion of other topological isomers of dsDNA rings, including catenanes and knotted rings. Type II topoisomerases break and join 2 DNA strands simultaneously in an ATP-dependent manner. This Haloquadratum walsbyi (strain DSM 16790 / HBSQ001) protein is DNA gyrase subunit A.